A 423-amino-acid polypeptide reads, in one-letter code: uncharacterized protein (423 aa).

The substrate site is built by S51, D138, and N150. Residues 170 to 171 (TD) and 214 to 220 (TGGMRTK) contribute to the ATP site. The region spanning 315-406 (KGAIIIDENS…EKIHDVLGYS (92 aa)) is the PUA domain.

It belongs to the glutamate 5-kinase family.

The protein localises to the cytoplasm. This is an uncharacterized protein from Saccharomyces cerevisiae (strain ATCC 204508 / S288c) (Baker's yeast).